The chain runs to 397 residues: Argininosuccinate synthase (397 aa).

7-15 (AFSGGLDTT) contacts ATP. Residue tyrosine 84 coordinates L-citrulline. Glycine 114 is an ATP binding site. L-aspartate contacts are provided by threonine 116, asparagine 120, and aspartate 121. Asparagine 120 serves as a coordination point for L-citrulline. L-citrulline-binding residues include arginine 124, serine 170, serine 179, glutamate 254, and tyrosine 266.

This sequence belongs to the argininosuccinate synthase family. Type 1 subfamily. As to quaternary structure, homotetramer.

It is found in the cytoplasm. It carries out the reaction L-citrulline + L-aspartate + ATP = 2-(N(omega)-L-arginino)succinate + AMP + diphosphate + H(+). The protein operates within amino-acid biosynthesis; L-arginine biosynthesis; L-arginine from L-ornithine and carbamoyl phosphate: step 2/3. The sequence is that of Argininosuccinate synthase from Haloquadratum walsbyi (strain DSM 16790 / HBSQ001).